The sequence spans 223 residues: DNA mismatch repair protein MutH (223 aa).

It belongs to the MutH family.

It localises to the cytoplasm. Sequence-specific endonuclease that cleaves unmethylated GATC sequences. It is involved in DNA mismatch repair. The polypeptide is DNA mismatch repair protein MutH (Shewanella baltica (strain OS223)).